A 91-amino-acid polypeptide reads, in one-letter code: Small ribosomal subunit protein bS20 (91 aa).

The segment covering 1–18 (MPLHKSAEKRLRQSEKRN) has biased composition (basic and acidic residues). A disordered region spans residues 1-24 (MPLHKSAEKRLRQSEKRNVRNRAR).

It belongs to the bacterial ribosomal protein bS20 family.

Binds directly to 16S ribosomal RNA. In Chlorobium phaeobacteroides (strain DSM 266 / SMG 266 / 2430), this protein is Small ribosomal subunit protein bS20.